The chain runs to 70 residues: MGKVRPTFVKRPAREIVEKYEEYLTTDFEHNKKVVEIVARPKTKKLRNMIAGYVTHLMRLKERQREEGTE.

Belongs to the eukaryotic ribosomal protein eS17 family.

In Methanopyrus kandleri (strain AV19 / DSM 6324 / JCM 9639 / NBRC 100938), this protein is Small ribosomal subunit protein eS17.